We begin with the raw amino-acid sequence, 170 residues long: Transmembrane protein 252 (170 aa).

2 consecutive transmembrane segments (helical) span residues 8 to 28 (ILCA…AFFI) and 40 to 60 (LIAA…GIFW). A disordered region spans residues 112–147 (CPAEREASGIPPPLYTETGLEFQDGNDSHPEAPPSY).

It is found in the membrane. In Pongo abelii (Sumatran orangutan), this protein is Transmembrane protein 252 (TMEM252).